The following is a 78-amino-acid chain: D-alanyl carrier protein (78 aa).

The Carrier domain occupies 1–78 (MEFKEQVLDL…KIVEALEELR (78 aa)). O-(pantetheine 4'-phosphoryl)serine is present on S36.

It belongs to the DltC family. In terms of processing, 4'-phosphopantetheine is transferred from CoA to a specific serine of apo-DCP.

The protein localises to the cytoplasm. It functions in the pathway cell wall biogenesis; lipoteichoic acid biosynthesis. Carrier protein involved in the D-alanylation of lipoteichoic acid (LTA). The loading of thioester-linked D-alanine onto DltC is catalyzed by D-alanine--D-alanyl carrier protein ligase DltA. The DltC-carried D-alanyl group is further transferred to cell membrane phosphatidylglycerol (PG) by forming an ester bond, probably catalyzed by DltD. D-alanylation of LTA plays an important role in modulating the properties of the cell wall in Gram-positive bacteria, influencing the net charge of the cell wall. This Staphylococcus haemolyticus (strain JCSC1435) protein is D-alanyl carrier protein.